The primary structure comprises 57 residues: UPF0391 membrane protein AZOSEA39630 (57 aa).

2 helical membrane-spanning segments follow: residues 4-24 and 37-57; these read WAII…TGVA and IALA…VLVF.

It belongs to the UPF0391 family.

It is found in the cell membrane. The protein is UPF0391 membrane protein AZOSEA39630 of Aromatoleum aromaticum (strain DSM 19018 / LMG 30748 / EbN1) (Azoarcus sp. (strain EbN1)).